The chain runs to 668 residues: tRNA 5-methylaminomethyl-2-thiouridine biosynthesis bifunctional protein MnmC (668 aa).

The segment at 1–245 is tRNA (mnm(5)s(2)U34)-methyltransferase; it reads MKHYSIQPAN…KREMLCGVME (245 aa). Positions 270–668 are FAD-dependent cmnm(5)s(2)U34 oxidoreductase; it reads IGGGIASALL…LLKGKAVKAG (399 aa).

It in the N-terminal section; belongs to the methyltransferase superfamily. tRNA (mnm(5)s(2)U34)-methyltransferase family. This sequence in the C-terminal section; belongs to the DAO family. It depends on FAD as a cofactor.

The protein resides in the cytoplasm. It catalyses the reaction 5-aminomethyl-2-thiouridine(34) in tRNA + S-adenosyl-L-methionine = 5-methylaminomethyl-2-thiouridine(34) in tRNA + S-adenosyl-L-homocysteine + H(+). Catalyzes the last two steps in the biosynthesis of 5-methylaminomethyl-2-thiouridine (mnm(5)s(2)U) at the wobble position (U34) in tRNA. Catalyzes the FAD-dependent demodification of cmnm(5)s(2)U34 to nm(5)s(2)U34, followed by the transfer of a methyl group from S-adenosyl-L-methionine to nm(5)s(2)U34, to form mnm(5)s(2)U34. In Escherichia coli O157:H7, this protein is tRNA 5-methylaminomethyl-2-thiouridine biosynthesis bifunctional protein MnmC.